An 871-amino-acid chain; its full sequence is Protein arg-6, mitochondrial (871 aa).

The N-terminal 44 residues, 1 to 44 (MYSACAVALRAGARRVVRRVPKSARALPRAAAARRQISTTAARS), are a transit peptide targeting the mitochondrion. In terms of domain architecture, N-acetyltransferase spans 336–488 (QASTSLSEFK…DFTENGRAML (153 aa)). The active site involves Cys689.

The protein in the N-terminal section; belongs to the acetylglutamate kinase family. It in the C-terminal section; belongs to the NAGSA dehydrogenase family. The protein precursor is cleaved into the two biologically active enzymes, the kinase and the reductase.

Its subcellular location is the mitochondrion. It carries out the reaction N-acetyl-L-glutamate 5-semialdehyde + phosphate + NADP(+) = N-acetyl-L-glutamyl 5-phosphate + NADPH + H(+). It catalyses the reaction N-acetyl-L-glutamate + ATP = N-acetyl-L-glutamyl 5-phosphate + ADP. The protein operates within amino-acid biosynthesis; L-arginine biosynthesis; N(2)-acetyl-L-ornithine from L-glutamate: step 2/4. Its pathway is amino-acid biosynthesis; L-arginine biosynthesis; N(2)-acetyl-L-ornithine from L-glutamate: step 3/4. In Neurospora crassa (strain ATCC 24698 / 74-OR23-1A / CBS 708.71 / DSM 1257 / FGSC 987), this protein is Protein arg-6, mitochondrial (arg-6).